A 236-amino-acid polypeptide reads, in one-letter code: Snake venom serine protease pallase (236 aa).

One can recognise a Peptidase S1 domain in the interval 1-227 (VIGGDECNIN…HLDWIENIIA (227 aa)). 6 disulfides stabilise this stretch: C7–C139, C26–C42, C74–C234, C118–C188, C150–C167, and C178–C203. Residues H41 and D86 each act as charge relay system in the active site. The active-site Charge relay system is S182.

Belongs to the peptidase S1 family. Snake venom subfamily. In terms of assembly, monomer. As to expression, expressed by the venom gland.

It is found in the secreted. In terms of biological role, snake venom serine protease that may act in the hemostasis system of the prey. The chain is Snake venom serine protease pallase from Gloydius halys (Chinese water mocassin).